The sequence spans 90 residues: MNKTDLINAVAEQAELSKKDASKAVDAVFESITGALKEGGKVQLVGFGSFEVRERSARKGRNPQTGEEIEIPATKNPAFKPGKQLKDAVN.

At threonine 4 the chain carries Phosphothreonine. The interval 55–90 (RSARKGRNPQTGEEIEIPATKNPAFKPGKQLKDAVN) is disordered.

Belongs to the bacterial histone-like protein family. In terms of assembly, homodimer.

In terms of biological role, histone-like DNA-binding protein which is capable of wrapping DNA to stabilize it, and thus to prevent its denaturation under extreme environmental conditions. This Halalkalibacterium halodurans (strain ATCC BAA-125 / DSM 18197 / FERM 7344 / JCM 9153 / C-125) (Bacillus halodurans) protein is DNA-binding protein HU-1 (hup1).